A 342-amino-acid chain; its full sequence is GTPase Obg (342 aa).

Residues 1 to 159 (MKFLDEAKVY…MWIWLRLKLI (159 aa)) form the Obg domain. Residues 160-327 (ADAGLVGLPN…ALRALQTEID (168 aa)) form the OBG-type G domain. Residues 166–173 (GLPNAGKS), 191–195 (FTTLH), 212–215 (DIPG), 279–282 (SKAD), and 308–310 (SSA) contribute to the GTP site. 2 residues coordinate Mg(2+): S173 and T193.

This sequence belongs to the TRAFAC class OBG-HflX-like GTPase superfamily. OBG GTPase family. As to quaternary structure, monomer. It depends on Mg(2+) as a cofactor.

The protein localises to the cytoplasm. Functionally, an essential GTPase which binds GTP, GDP and possibly (p)ppGpp with moderate affinity, with high nucleotide exchange rates and a fairly low GTP hydrolysis rate. Plays a role in control of the cell cycle, stress response, ribosome biogenesis and in those bacteria that undergo differentiation, in morphogenesis control. This Methylobacterium radiotolerans (strain ATCC 27329 / DSM 1819 / JCM 2831 / NBRC 15690 / NCIMB 10815 / 0-1) protein is GTPase Obg.